Here is a 400-residue protein sequence, read N- to C-terminus: MLKVEMLSTGDEVLHGQIVDTNAAWLADFFFHQGLPLSRRNTVGDNLDDLVTILRERSQHADVLIVNGGLGPTSDDLSALAAATAKGEGLVLHEAWLKEMERYFHERGRVMAPSNRKQAELPASAEFINNPVGTACGFAVQLNRCLMFFTPGVPSEFKVMVEHEILPRLRERFSLPQLPVCLRLTTFGRSESDLAQSLDTLQLPPGVTMGYRSSMPIIELKLTGPASEQQAMEKLWLDVKRVAGQSVIFEGTEGLPAQISRELQNRQFSLTLSEQFTGGLLALQLSRAGAPLLACEVVPSQEETLAQTAHWITERRANHFAGLALAVSGFENEHLNFALATPDGTFALRVRFSTTRYSLAIRQEVCAMMALNMLRRWLNGQDIASEHGWIEVIESMTLSV.

Belongs to the CinA family.

This chain is CinA-like protein, found in Escherichia coli (strain SE11).